Consider the following 369-residue polypeptide: Beta-1,4-galactosyltransferase 2 (369 aa).

Topologically, residues 1–15 are cytoplasmic; it reads MSRLLGGTLERVCKA. A helical; Signal-anchor for type II membrane protein transmembrane segment spans residues 16 to 36; the sequence is VLLLCLLHFLVAVILYFDVYA. At 37-369 the chain is on the lumenal side; that stretch reads QHLAFFSRFS…GQPMSWLTQG (333 aa). Positions 58-73 are enriched in polar residues; that stretch reads ASSSTNCSRPNATAAS. Positions 58 to 90 are disordered; that stretch reads ASSSTNCSRPNATAASSGLPEVPSARPGPTAPV. Asn63 and Asn68 each carry an N-linked (GlcNAc...) asparagine glycan. A disulfide bridge connects residues Cys94 and Cys136. UDP-alpha-D-galactose contacts are provided by residues 147 to 151, 186 to 188, 214 to 215, and Trp275; these read PFRHR, FNR, and VD. A disulfide bridge connects residues Cys208 and Cys227. Asp215 lines the Mn(2+) pocket. 277 to 280 lines the N-acetyl-D-glucosamine pocket; that stretch reads GEDD. His308 provides a ligand contact to Mn(2+). UDP-alpha-D-galactose is bound at residue 308–310; the sequence is HDR. Residue Arg320 coordinates N-acetyl-D-glucosamine. An N-linked (GlcNAc...) asparagine glycan is attached at Asn354.

Belongs to the glycosyltransferase 7 family. The cofactor is Mn(2+).

It localises to the golgi apparatus. The protein resides in the golgi stack membrane. It carries out the reaction D-glucose + UDP-alpha-D-galactose = lactose + UDP + H(+). The catalysed reaction is an N-acetyl-beta-D-glucosaminyl derivative + UDP-alpha-D-galactose = a beta-D-galactosyl-(1-&gt;4)-N-acetyl-beta-D-glucosaminyl derivative + UDP + H(+). It catalyses the reaction N-acetyl-D-glucosamine + UDP-alpha-D-galactose = beta-D-galactosyl-(1-&gt;4)-N-acetyl-D-glucosamine + UDP + H(+). It functions in the pathway protein modification; protein glycosylation. In terms of biological role, responsible for the synthesis of complex-type N-linked oligosaccharides in many glycoproteins as well as the carbohydrate moieties of glycolipids. Can produce lactose. The sequence is that of Beta-1,4-galactosyltransferase 2 from Mus musculus (Mouse).